Here is a 259-residue protein sequence, read N- to C-terminus: Phosphate import ATP-binding protein PstB 1 (259 aa).

Residues 13-254 (IQVRGLEFFY…PSKTQTEDYI (242 aa)) enclose the ABC transporter domain. 45 to 52 (GPSGCGKS) contributes to the ATP binding site.

Belongs to the ABC transporter superfamily. Phosphate importer (TC 3.A.1.7) family. As to quaternary structure, the complex is composed of two ATP-binding proteins (PstB), two transmembrane proteins (PstC and PstA) and a solute-binding protein (PstS).

Its subcellular location is the cell inner membrane. The catalysed reaction is phosphate(out) + ATP + H2O = ADP + 2 phosphate(in) + H(+). Its function is as follows. Part of the ABC transporter complex PstSACB involved in phosphate import. Responsible for energy coupling to the transport system. This Pseudomonas savastanoi pv. phaseolicola (strain 1448A / Race 6) (Pseudomonas syringae pv. phaseolicola (strain 1448A / Race 6)) protein is Phosphate import ATP-binding protein PstB 1.